The sequence spans 320 residues: Ferrochelatase (320 aa).

The Fe cation site is built by His-194 and Glu-275.

It belongs to the ferrochelatase family.

The protein localises to the cytoplasm. The enzyme catalyses heme b + 2 H(+) = protoporphyrin IX + Fe(2+). It functions in the pathway porphyrin-containing compound metabolism; protoheme biosynthesis; protoheme from protoporphyrin-IX: step 1/1. Catalyzes the ferrous insertion into protoporphyrin IX. In Serratia proteamaculans (strain 568), this protein is Ferrochelatase.